The sequence spans 217 residues: Large ribosomal subunit protein bL25 (217 aa).

Positions 185–217 (TKETVEDEEAEEAAAEGAEETGETGETEEGGDE) are disordered. The segment covering 189–217 (VEDEEAEEAAAEGAEETGETGETEEGGDE) has biased composition (acidic residues).

Belongs to the bacterial ribosomal protein bL25 family. CTC subfamily. As to quaternary structure, part of the 50S ribosomal subunit; part of the 5S rRNA/L5/L18/L25 subcomplex. Contacts the 5S rRNA. Binds to the 5S rRNA independently of L5 and L18.

Its function is as follows. This is one of the proteins that binds to the 5S RNA in the ribosome where it forms part of the central protuberance. The protein is Large ribosomal subunit protein bL25 of Desulfosudis oleivorans (strain DSM 6200 / JCM 39069 / Hxd3) (Desulfococcus oleovorans).